Here is a 329-residue protein sequence, read N- to C-terminus: Protein-arginine N-acetylglucosaminyltransferase NleB1 (329 aa).

Arginine 13 carries an N-beta-linked (GlcNAc) arginine; by autocatalysis glycan. A UDP-N-acetyl-alpha-D-glucosamine-binding site is contributed by 48-50 (QWF). The N-beta-linked (GlcNAc) arginine; by autocatalysis glycan is linked to arginine 53. Residue tyrosine 72 participates in UDP-N-acetyl-alpha-D-glucosamine binding. An N-beta-linked (GlcNAc) arginine; by autocatalysis glycan is attached at arginine 159. Residue 219–222 (YLDA) coordinates UDP-N-acetyl-alpha-D-glucosamine. The short motif at 221-223 (DAD) is the DXD motif element. Residue aspartate 223 participates in Mn(2+) binding. The Proton acceptor role is filled by glutamate 253. Arginine 293 is a glycosylation site (N-beta-linked (GlcNAc) arginine; by autocatalysis). Positions 320 and 322 each coordinate Mn(2+). UDP-N-acetyl-alpha-D-glucosamine is bound by residues serine 322 and 327–329 (SSW).

The protein belongs to the glycosyltransferase NleB family. It depends on Mn(2+) as a cofactor. Post-translationally, auto-glycosylated: arginine GlcNAcylation is required for activity toward death domain-containing host target proteins.

It is found in the secreted. Its subcellular location is the host cytoplasm. The enzyme catalyses L-arginyl-[protein] + UDP-N-acetyl-alpha-D-glucosamine = N(omega)-(N-acetyl-beta-D-glucosaminyl)-L-arginyl-[protein] + UDP + H(+). Its function is as follows. Protein-arginine N-acetylglucosaminyltransferase effector that disrupts TNF signaling in infected cells, including NF-kappa-B signaling, apoptosis and necroptosis. Acts by catalyzing the transfer of a single N-acetylglucosamine (GlcNAc) to a conserved arginine residue in the death domain of host proteins FADD, TRADD, FAS, TNFRSF1A/TNFR1, TNFRSF25/DR3 and RIPK1: arginine GlcNAcylation prevents homotypic/heterotypic death domain interactions and assembly of the oligomeric TNF-alpha receptor complex, thereby disrupting TNF signaling. Has preference for host FADD as substrate compared to other death domain-containing proteins. Also acts on host proteins without a death domain: catalyzes arginine GlcNAcylation of HIF1A, thereby regulating host glucose metabolism. Also displays intra-bacterial activity by mediating GlcNAcylation of glutathione synthetase GshB. Catalyzes auto-GlcNAcylation, which is required for activity toward death domain-containing host target proteins. Shows a higher enzymatic activity than NleB2. This is Protein-arginine N-acetylglucosaminyltransferase NleB1 from Escherichia coli O127:H6 (strain E2348/69 / EPEC).